Consider the following 647-residue polypeptide: Threonine--tRNA ligase (647 aa).

The 61-residue stretch at 1 to 61 (MINITFPDGA…TEDGSIEIVT (61 aa)) folds into the TGS domain. The interval 242 to 540 (DHRKLGKELD…LIENYKGAFP (299 aa)) is catalytic. Zn(2+) contacts are provided by Cys-336, His-387, and His-517.

Belongs to the class-II aminoacyl-tRNA synthetase family. As to quaternary structure, homodimer. Requires Zn(2+) as cofactor.

The protein localises to the cytoplasm. The enzyme catalyses tRNA(Thr) + L-threonine + ATP = L-threonyl-tRNA(Thr) + AMP + diphosphate + H(+). Catalyzes the attachment of threonine to tRNA(Thr) in a two-step reaction: L-threonine is first activated by ATP to form Thr-AMP and then transferred to the acceptor end of tRNA(Thr). Also edits incorrectly charged L-seryl-tRNA(Thr). The polypeptide is Threonine--tRNA ligase (Streptococcus pneumoniae serotype 4 (strain ATCC BAA-334 / TIGR4)).